A 550-amino-acid polypeptide reads, in one-letter code: Hydroxylamine reductase (550 aa).

4 residues coordinate [2Fe-2S] cluster: cysteine 3, cysteine 6, cysteine 18, and cysteine 25. Residues histidine 249, glutamate 273, cysteine 317, cysteine 405, cysteine 433, cysteine 458, glutamate 492, and lysine 494 each coordinate hybrid [4Fe-2O-2S] cluster. Position 405 is a cysteine persulfide (cysteine 405).

This sequence belongs to the HCP family. [2Fe-2S] cluster serves as cofactor. It depends on hybrid [4Fe-2O-2S] cluster as a cofactor.

It is found in the cytoplasm. It carries out the reaction A + NH4(+) + H2O = hydroxylamine + AH2 + H(+). In terms of biological role, catalyzes the reduction of hydroxylamine to form NH(3) and H(2)O. The polypeptide is Hydroxylamine reductase (Proteus mirabilis (strain HI4320)).